The following is an 85-amino-acid chain: Dual endothelin-1/VEGF signal peptide receptor (85 aa).

Residues 1–18 lie on the Extracellular side of the membrane; it reads MTMFKGSNEMKSRWNWGS. Residues 19–37 traverse the membrane as a helical segment; sequence ITCIICFTCVGSQLSMSSS. Topologically, residues 38–85 are cytoplasmic; it reads KASNFSGPLQLYQRELEIFIVLTDVPNYRLIKENSHLHTTIVDQGRTV.

N-glycosylated. In terms of tissue distribution, expressed in kidney. Expressed in endothelial cells.

It localises to the cell membrane. Its function is as follows. Dual receptor for both endothelin-1 and the signal sequence of vascular endothelial growth factor A. Does not act as a receptor for angiotensin-2. Does not bind the VEGFA mature protein. May play a role in angiogenesis with a significant role in cardiovascular and neural development. This is Dual endothelin-1/VEGF signal peptide receptor from Homo sapiens (Human).